A 265-amino-acid polypeptide reads, in one-letter code: Eukaryotic translation initiation factor 3 subunit J (265 aa).

2 stretches are compositionally biased toward acidic residues: residues 1 to 12 and 26 to 44; these read MAPERWDDEEDS and DEEE…DSEV. Disordered stretches follow at residues 1 to 113 and 212 to 265; these read MAPE…DADL and TMSN…DDFM. Composition is skewed to basic and acidic residues over residues 45–65 and 73–86; these read EREK…EAAA and RIQE…KKAE. A coiled-coil region spans residues 61 to 95; that stretch reads AEAAAKKKSKSQRIQEHKEERKKKAEEEDSDSEEE. Over residues 87–97 the composition is skewed to acidic residues; sequence EEDSDSEEEDD. The span at 216–228 shows a compositional bias: basic and acidic residues; that stretch reads EKMREERAADKGS. Residues 251 to 265 show a composition bias toward acidic residues; sequence DYDNGDDGLGDDDFM.

The protein belongs to the eIF-3 subunit J family. Component of the eukaryotic translation initiation factor 3 (eIF-3) complex.

Its subcellular location is the cytoplasm. In terms of biological role, component of the eukaryotic translation initiation factor 3 (eIF-3) complex, which is involved in protein synthesis of a specialized repertoire of mRNAs and, together with other initiation factors, stimulates binding of mRNA and methionyl-tRNAi to the 40S ribosome. The eIF-3 complex specifically targets and initiates translation of a subset of mRNAs involved in cell proliferation. The polypeptide is Eukaryotic translation initiation factor 3 subunit J (hcr1) (Aspergillus oryzae (strain ATCC 42149 / RIB 40) (Yellow koji mold)).